The chain runs to 370 residues: Chaperone protein DnaJ (370 aa).

A J domain is found at 6-70 (DFYEILGVSK…QKRANYDQFG (65 aa)). The segment at 134–216 (GANKSVTLNV…CHGKGFNTKR (83 aa)) adopts a CR-type zinc-finger fold. Residues Cys-147, Cys-150, Cys-164, Cys-167, Cys-190, Cys-193, Cys-204, and Cys-207 each coordinate Zn(2+). 4 CXXCXGXG motif repeats span residues 147–154 (CTSCHGSG), 164–171 (CSRCGGTG), 190–197 (CPDCGGSG), and 204–211 (CGECHGKG).

Belongs to the DnaJ family. Homodimer. Zn(2+) is required as a cofactor.

The protein resides in the cytoplasm. In terms of biological role, participates actively in the response to hyperosmotic and heat shock by preventing the aggregation of stress-denatured proteins and by disaggregating proteins, also in an autonomous, DnaK-independent fashion. Unfolded proteins bind initially to DnaJ; upon interaction with the DnaJ-bound protein, DnaK hydrolyzes its bound ATP, resulting in the formation of a stable complex. GrpE releases ADP from DnaK; ATP binding to DnaK triggers the release of the substrate protein, thus completing the reaction cycle. Several rounds of ATP-dependent interactions between DnaJ, DnaK and GrpE are required for fully efficient folding. Also involved, together with DnaK and GrpE, in the DNA replication of plasmids through activation of initiation proteins. In Erysipelothrix rhusiopathiae, this protein is Chaperone protein DnaJ.